A 2097-amino-acid polypeptide reads, in one-letter code: 1-phosphatidylinositol 3-phosphate 5-kinase (2097 aa).

The segment at 1–44 is disordered; the sequence is MATDDKSSPTLDSANDLPRSPASPSHLTHFKPLTPDQDEPPFKS. Ala2 carries the post-translational modification N-acetylalanine. Phosphoserine; by autocatalysis occurs at positions 23 and 48. The segment at 56 to 122 is disordered; that stretch reads NKERGEGGQG…AEPACGGHDP (67 aa). Residues 66–81 show a composition bias toward low complexity; sequence EQQSPSSSWASPQIPS. Ser88 bears the Phosphoserine mark. The FYVE-type zinc-finger motif lies at 158–218; the sequence is DSQCKECYDC…ACTYCRKIAL (61 aa). The Zn(2+) site is built by Cys164, Cys167, Cys180, Cys183, Cys188, Cys191, Cys210, and Cys213. A phosphoserine mark is found at Ser299, Ser307, and Ser312. Ser318 is modified (phosphoserine; by PKB/AKT1 or PKB/AKT2). Ser329 is subject to Phosphoserine. The DEP domain occupies 365-440; that stretch reads HTSGMEFQDH…DEYALYRPLQ (76 aa). Polar residues predominate over residues 442–459; that stretch reads TEFSETPSPDSDSVNSVE. Positions 442–469 are disordered; sequence TEFSETPSPDSDSVNSVEGHSEPSWFKD. Basic and acidic residues predominate over residues 460 to 469; sequence GHSEPSWFKD. Ser475 is modified (phosphoserine). The segment at 484 to 505 is disordered; sequence GDDNLANSASPSKRTSVSSFQS. Over residues 488–505 the composition is skewed to polar residues; it reads LANSASPSKRTSVSSFQS. The chaperonin-like domain stretch occupies residues 616 to 868; the sequence is MMALLQQLLQ…MICVAYHSQL (253 aa). 4 disordered regions span residues 895–928, 989–1022, 1171–1194, and 1511–1555; these read GRGE…EDST, AVGN…QDDT, HSKD…EERG, and FQQE…HNGE. Positions 902-912 are enriched in polar residues; it reads SQEQVSGSSLP. Residues 1175–1184 show a composition bias toward polar residues; sequence ASCTSGGKSG. Over residues 1185-1194 the composition is skewed to basic and acidic residues; that stretch reads NKTESDEERG. Ser1543 and Ser1548 each carry phosphoserine. Residue Ser1668 is modified to Phosphoserine; by autocatalysis. Positions 1697–1742 are disordered; sequence EGLPANSALDNRPKSSSPIRLPEISGGQTNRTVEAEPQPTKKASGM. Position 1753 is a phosphoserine (Ser1753). The 327-residue stretch at 1757-2083 folds into the PIPK domain; it reads SSQKRETLRG…RFCEAMDKYF (327 aa). The disordered stretch occupies residues 1781–1800; the sequence is GLESQGLEPQDEVDGGDTQK. The catalytic stretch occupies residues 1841-2097; that stretch reads EEEFIRSLSH…DHWTGLDLNC (257 aa). Phosphoserine; by autocatalysis is present on residues Ser1968 and Ser2052.

In terms of assembly, component of the PI(3,5)P2 regulatory complex/PAS complex, at least composed of PIKFYVE, FIG4 and VAC14. VAC14 nucleates the assembly of the complex and serves as a scaffold by pentamerizing into a star-shaped structure, which can bind a single copy each of PIKFYVE and FIG4 and coordinates their activities. Interacts (via chaperonin-like domain) with RABEPK; the interaction recruits RABEPK to the endosomal membrane. Interacts with SPAG9. Interacts with EGFR. Mn(2+) serves as cofactor. Post-translationally, phosphorylated in response to insulin at Ser-318 in a protein kinase B (PKB)-dependent manner. Autophosphorylates which down-regulates lipid product formation. In terms of processing, autophosphorylates which inhibits its own phosphatidylinositol 3-phosphate 5-kinase activity, stimulates FIG4 lipid phosphatase activity and down-regulates lipid product formation. Dephosphorylated by FIG4 in the PI(3,5)P2 regulatory complex, at Ser-48, Ser-1668 and Ser-2052. Phosphorylated in response to insulin at Ser-318 in a protein kinase B (PKB)-dependent manner. In terms of tissue distribution, ubiquitous.

Its subcellular location is the endosome membrane. The protein resides in the early endosome membrane. It localises to the cytoplasmic vesicle. It is found in the phagosome membrane. The protein localises to the late endosome membrane. It carries out the reaction a 1,2-diacyl-sn-glycero-3-phospho-(1D-myo-inositol-3-phosphate) + ATP = a 1,2-diacyl-sn-glycero-3-phospho-(1D-myo-inositol-3,5-bisphosphate) + ADP + H(+). The catalysed reaction is a 1,2-diacyl-sn-glycero-3-phospho-(1D-myo-inositol) + ATP = a 1,2-diacyl-sn-glycero-3-phospho-(1D-myo-inositol-5-phosphate) + ADP + H(+). It catalyses the reaction L-seryl-[protein] + ATP = O-phospho-L-seryl-[protein] + ADP + H(+). Its activity is regulated as follows. Inhibited by apilimod and YM201636. Functionally, dual specificity kinase implicated in myriad essential cellular processes such as maintenance of endomembrane homeostasis, and endocytic-vacuolar pathway, lysosomal trafficking, nuclear transport, stress- or hormone-induced signaling and cell cycle progression. The PI(3,5)P2 regulatory complex regulates both the synthesis and turnover of phosphatidylinositol 3,5-bisphosphate (PtdIns(3,5)P2). Sole enzyme to catalyze the phosphorylation of phosphatidylinositol 3-phosphate on the fifth hydroxyl of the myo-inositol ring, to form (PtdIns(3,5)P2). Also catalyzes the phosphorylation of phosphatidylinositol on the fifth hydroxyl of the myo-inositol ring, to form phosphatidylinositol 5-phosphate (PtdIns(5)P). Has serine-protein kinase activity and is able to autophosphorylate and transphosphorylate. Autophosphorylation inhibits its own phosphatidylinositol 3-phosphate 5-kinase activity, stimulates FIG4 lipid phosphatase activity and down-regulates lipid product formation. Involved in key endosome operations such as fission and fusion in the course of endosomal cargo transport. Required for the maturation of early into late endosomes, phagosomes and lysosomes. Regulates vacuole maturation and nutrient recovery following engulfment of macromolecules, initiates the redistribution of accumulated lysosomal contents back into the endosome network. Critical regulator of the morphology, degradative activity, and protein turnover of the endolysosomal system in macrophages and platelets. In neutrophils, critical to perform chemotaxis, generate ROS, and undertake phagosome fusion with lysosomes. Plays a key role in the processing and presentation of antigens by major histocompatibility complex class II (MHC class II) mediated by CTSS. Regulates melanosome biogenesis by controlling the delivery of proteins from the endosomal compartment to the melanosome. Essential for systemic glucose homeostasis, mediates insulin-induced signals for endosome/actin remodeling in the course of GLUT4 translocation/glucose uptake activation. Supports microtubule-based endosome-to-trans-Golgi network cargo transport, trhough association with SPAG9 and RABEPK. Mediates EGFR trafficking to the nucleus. The sequence is that of 1-phosphatidylinositol 3-phosphate 5-kinase from Mus musculus (Mouse).